The chain runs to 286 residues: Spermidine/putrescine transport system permease protein PotB homolog (286 aa).

The next 6 membrane-spanning stretches (helical) occupy residues 10–30, 62–82, 94–114, 136–156, 193–213, and 248–268; these read AVPF…WIIV, LWTA…FCYF, FVIA…LIGL, FGSG…MFLP, TAIL…VAIA, and GAII…IFAP. The ABC transmembrane type-1 domain occupies 58 to 264; that stretch reads FWTSLWTATV…LITFAFYFVV (207 aa).

This sequence belongs to the binding-protein-dependent transport system permease family. CysTW subfamily.

The protein resides in the cell membrane. Its function is as follows. Required for the activity of the bacterial transport system of putrescine and spermidine. The polypeptide is Spermidine/putrescine transport system permease protein PotB homolog (potB) (Mycoplasma pneumoniae (strain ATCC 29342 / M129 / Subtype 1) (Mycoplasmoides pneumoniae)).